We begin with the raw amino-acid sequence, 326 residues long: GTP cyclohydrolase MptA (326 aa).

It belongs to the GTP cyclohydrolase IV family. Homodimer. It depends on Fe(2+) as a cofactor.

The catalysed reaction is GTP + H2O = 7,8-dihydroneopterin 2',3'-cyclic phosphate + formate + diphosphate + H(+). The protein operates within cofactor biosynthesis; 5,6,7,8-tetrahydromethanopterin biosynthesis. Functionally, converts GTP to 7,8-dihydro-D-neopterin 2',3'-cyclic phosphate, the first intermediate in the biosynthesis of coenzyme methanopterin. The chain is GTP cyclohydrolase MptA from Methanoregula boonei (strain DSM 21154 / JCM 14090 / 6A8).